A 537-amino-acid polypeptide reads, in one-letter code: Mitochondria-eating protein (537 aa).

Residues Met-1 to Arg-270 form an interaction with YWHAG/14-3-3 protein gamma region. Phosphoserine is present on residues Ser-13, Ser-85, Ser-123, Ser-127, Ser-154, and Ser-157. A disordered region spans residues Ser-109–Ala-150. A compositionally biased stretch (basic and acidic residues) spans Lys-110–Asp-124. The segment covering Asn-125–Gln-137 has biased composition (polar residues). Coiled coils occupy residues Asn-152–Lys-184 and Gln-210–Arg-243. Disordered stretches follow at residues Gln-171–Val-212 and Glu-233–Met-291. A compositionally biased stretch (basic and acidic residues) spans Glu-179–Pro-209. Positions Gly-239–Thr-251 are enriched in low complexity. Basic residues predominate over residues Arg-252–Ser-269. 3 positions are modified to phosphoserine: Ser-283, Ser-285, and Ser-508.

Belongs to the MIEAP family. As to quaternary structure, interacts (via coiled-coil domains) with BNIP3L (via BH3 domain). Interacts (via coiled-coil domains) with BNIP3 (via BH3 domain). Interacts with YWHAG/14-3-3 protein gamma; a protein that also plays a role in MALM. As to expression, in testis, expressed primarily in spermatids.

The protein resides in the cytoplasm. Its subcellular location is the cytosol. It is found in the mitochondrion outer membrane. The protein localises to the mitochondrion matrix. Key regulator of mitochondrial quality that mediates the repairing or degradation of unhealthy mitochondria in response to mitochondrial damage. Mediator of mitochondrial protein catabolic process (also named MALM) by mediating the degradation of damaged proteins inside mitochondria by promoting the accumulation in the mitochondrial matrix of hydrolases that are characteristic of the lysosomal lumen. Also involved in mitochondrion degradation of damaged mitochondria by promoting the formation of vacuole-like structures (named MIV), which engulf and degrade unhealthy mitochondria by accumulating lysosomes. The physical interaction of SPATA18/MIEAP, BNIP3 and BNIP3L/NIX at the mitochondrial outer membrane regulates the opening of a pore in the mitochondrial double membrane in order to mediate the translocation of lysosomal proteins from the cytoplasm to the mitochondrial matrix. Binds cardiolipin. May form molecular condensates (non-membrane-bounded organelles) within mitochondria that compartmentalize and promote cardiolipin metabolism. This chain is Mitochondria-eating protein (Spata18), found in Mus musculus (Mouse).